Consider the following 66-residue polypeptide: Large ribosomal subunit protein uL29 (66 aa).

This sequence belongs to the universal ribosomal protein uL29 family.

The protein is Large ribosomal subunit protein uL29 of Rhizobium etli (strain ATCC 51251 / DSM 11541 / JCM 21823 / NBRC 15573 / CFN 42).